We begin with the raw amino-acid sequence, 122 residues long: Large ribosomal subunit protein uL14 (122 aa).

This sequence belongs to the universal ribosomal protein uL14 family. In terms of assembly, part of the 50S ribosomal subunit. Forms a cluster with proteins L3 and L19. In the 70S ribosome, L14 and L19 interact and together make contacts with the 16S rRNA in bridges B5 and B8.

Functionally, binds to 23S rRNA. Forms part of two intersubunit bridges in the 70S ribosome. The chain is Large ribosomal subunit protein uL14 from Staphylococcus carnosus (strain TM300).